A 78-amino-acid polypeptide reads, in one-letter code: Acyl carrier protein (78 aa).

In terms of domain architecture, Carrier spans 2-77 (STIEERVKKI…AAIDYINGHQ (76 aa)). An O-(pantetheine 4'-phosphoryl)serine modification is found at Ser-37.

The protein belongs to the acyl carrier protein (ACP) family. 4'-phosphopantetheine is transferred from CoA to a specific serine of apo-ACP by AcpS. This modification is essential for activity because fatty acids are bound in thioester linkage to the sulfhydryl of the prosthetic group.

The protein resides in the cytoplasm. Its pathway is lipid metabolism; fatty acid biosynthesis. Functionally, carrier of the growing fatty acid chain in fatty acid biosynthesis. This chain is Acyl carrier protein, found in Erwinia tasmaniensis (strain DSM 17950 / CFBP 7177 / CIP 109463 / NCPPB 4357 / Et1/99).